Reading from the N-terminus, the 124-residue chain is MAKTKTEKKAKSAINEVVTRECTINLNRRLHKVGYKKRAPRAVKIVRKFAEKEMGTNDVRIDTRLNKALWHRGIRNPPFRIRVRLSRRRNDDEDSPNKLYTLVTYVPVSTFKELQTENVESTED.

It belongs to the eukaryotic ribosomal protein eL31 family.

This is Large ribosomal subunit protein eL31 (RpL31) from Aedes aegypti (Yellowfever mosquito).